A 62-amino-acid chain; its full sequence is Large ribosomal subunit protein bL28 (62 aa).

It belongs to the bacterial ribosomal protein bL28 family.

In Aster yellows witches'-broom phytoplasma (strain AYWB), this protein is Large ribosomal subunit protein bL28.